Here is a 222-residue protein sequence, read N- to C-terminus: Pyridoxal phosphate homeostasis protein (222 aa).

Lys35 carries the N6-(pyridoxal phosphate)lysine modification.

This sequence belongs to the pyridoxal phosphate-binding protein YggS/PROSC family.

Functionally, pyridoxal 5'-phosphate (PLP)-binding protein, which is involved in PLP homeostasis. This chain is Pyridoxal phosphate homeostasis protein, found in Helicobacter pylori (strain J99 / ATCC 700824) (Campylobacter pylori J99).